A 381-amino-acid chain; its full sequence is Tetraacyldisaccharide 4'-kinase (381 aa).

Position 78-85 (78-85) interacts with ATP; it reads AVGGTGKT.

It belongs to the LpxK family.

The enzyme catalyses a lipid A disaccharide + ATP = a lipid IVA + ADP + H(+). Its pathway is glycolipid biosynthesis; lipid IV(A) biosynthesis; lipid IV(A) from (3R)-3-hydroxytetradecanoyl-[acyl-carrier-protein] and UDP-N-acetyl-alpha-D-glucosamine: step 6/6. Its function is as follows. Transfers the gamma-phosphate of ATP to the 4'-position of a tetraacyldisaccharide 1-phosphate intermediate (termed DS-1-P) to form tetraacyldisaccharide 1,4'-bis-phosphate (lipid IVA). The polypeptide is Tetraacyldisaccharide 4'-kinase (Syntrophobacter fumaroxidans (strain DSM 10017 / MPOB)).